The sequence spans 128 residues: 3-aminoacrylate deaminase RutC (128 aa).

This sequence belongs to the RutC family.

It catalyses the reaction (Z)-3-aminoacrylate + H2O + H(+) = 3-oxopropanoate + NH4(+). Involved in pyrimidine catabolism. Catalyzes the deamination of 3-aminoacrylate to malonic semialdehyde, a reaction that can also occur spontaneously. RutC may facilitate the reaction and modulate the metabolic fitness, rather than catalyzing essential functions. This Azorhizobium caulinodans (strain ATCC 43989 / DSM 5975 / JCM 20966 / LMG 6465 / NBRC 14845 / NCIMB 13405 / ORS 571) protein is 3-aminoacrylate deaminase RutC.